The following is a 696-amino-acid chain: Verrucotoxin subunit beta (696 aa).

In terms of domain architecture, B30.2/SPRY spans 506–696 (HMPGVETIKD…GCTTESQWSN (191 aa)).

Belongs to the SNTX/VTX toxin family. In terms of assembly, tetramer composed of 2 alpha and 2 beta subunits. Glycosylated. As to expression, expressed by the venom gland.

The protein localises to the secreted. Its function is as follows. This lethal (towards mice) toxin induces hemolytic, cytolytic and hypotensive activities. Inhibits calcium channels and may activate ATP-sensitive potassium channels in frog atrial heart muscle. In guinea-pig ventricular myocytes, it modulates calcium channel activity through the beta-adrenoceptor-cAMP-PKA pathway (ADRB). In Synanceia verrucosa (Reef stonefish), this protein is Verrucotoxin subunit beta.